Reading from the N-terminus, the 114-residue chain is NAD(P)H-quinone oxidoreductase subunit M (114 aa).

This sequence belongs to the complex I NdhM subunit family. In terms of assembly, NDH-1 can be composed of about 15 different subunits; different subcomplexes with different compositions have been identified which probably have different functions.

The protein resides in the cellular thylakoid membrane. It carries out the reaction a plastoquinone + NADH + (n+1) H(+)(in) = a plastoquinol + NAD(+) + n H(+)(out). The catalysed reaction is a plastoquinone + NADPH + (n+1) H(+)(in) = a plastoquinol + NADP(+) + n H(+)(out). In terms of biological role, NDH-1 shuttles electrons from an unknown electron donor, via FMN and iron-sulfur (Fe-S) centers, to quinones in the respiratory and/or the photosynthetic chain. The immediate electron acceptor for the enzyme in this species is believed to be plastoquinone. Couples the redox reaction to proton translocation, and thus conserves the redox energy in a proton gradient. Cyanobacterial NDH-1 also plays a role in inorganic carbon-concentration. In Acaryochloris marina (strain MBIC 11017), this protein is NAD(P)H-quinone oxidoreductase subunit M.